The sequence spans 460 residues: GTPase Der (460 aa).

2 consecutive EngA-type G domains span residues 3-167 (FTFA…PEPD) and 189-364 (IRVA…AVWN). Residues 9–16 (GRPNVGKS), 56–60 (DTAGL), 119–122 (NKSE), 195–202 (GRPNAGKS), 242–246 (DTAGL), and 307–310 (NKWD) each bind GTP. Positions 365–449 (TRVPTAALNR…PVRIMLREKA (85 aa)) constitute a KH-like domain.

This sequence belongs to the TRAFAC class TrmE-Era-EngA-EngB-Septin-like GTPase superfamily. EngA (Der) GTPase family. As to quaternary structure, associates with the 50S ribosomal subunit.

In terms of biological role, GTPase that plays an essential role in the late steps of ribosome biogenesis. The polypeptide is GTPase Der (Rhodopseudomonas palustris (strain BisB5)).